The primary structure comprises 297 residues: Phosphatidylinositol N-acetylglucosaminyltransferase subunit C (297 aa).

A run of 4 helical transmembrane segments spans residues Val-67 to Gly-87, Thr-88 to Gly-108, Ala-153 to Val-173, and Ala-239 to Phe-259.

This sequence belongs to the PIGC family. Component of the glycosylphosphatidylinositol-N-acetylglucosaminyltransferase (GPI-GnT) complex composed at least by PIGA, PIGC, PIGH, PIGP, PIGQ, PIGY and DPM2. Interacts with PIGQ. Interacts with the heterodimer PIGA:PIGH.

The protein resides in the endoplasmic reticulum membrane. The protein operates within glycolipid biosynthesis; glycosylphosphatidylinositol-anchor biosynthesis. Its function is as follows. Part of the glycosylphosphatidylinositol-N-acetylglucosaminyltransferase (GPI-GnT) complex that catalyzes the transfer of N-acetylglucosamine from UDP-N-acetylglucosamine to phosphatidylinositol and participates in the first step of GPI biosynthesis. This chain is Phosphatidylinositol N-acetylglucosaminyltransferase subunit C, found in Mus musculus (Mouse).